A 279-amino-acid polypeptide reads, in one-letter code: uncharacterized protein (279 aa).

Composition is skewed to low complexity over residues 1-25 (MNENNKNNSSEDLNNNNNNNNNNNN), 86-151 (PSQS…NGNN), and 232-250 (NKNNNNNNNNDNNNNDDNN). Disordered regions lie at residues 1 to 27 (MNENNKNNSSEDLNNNNNNNNNNNNIK), 83 to 153 (NLFP…NNID), and 213 to 260 (QSVN…KVKS).

This is an uncharacterized protein from Dictyostelium discoideum (Social amoeba).